The following is a 744-amino-acid chain: NAD(P)H-quinone oxidoreductase subunit 5, chloroplastic (744 aa).

Helical transmembrane passes span tryptophan 9–phenylalanine 29, tryptophan 40–isoleucine 60, isoleucine 89–isoleucine 109, phenylalanine 125–isoleucine 145, isoleucine 147–threonine 167, glycine 185–phenylalanine 205, asparagine 219–alanine 239, threonine 258–alanine 278, isoleucine 290–glutamine 312, leucine 327–isoleucine 347, alanine 354–cysteine 374, threonine 396–serine 416, tryptophan 425–tyrosine 445, leucine 549–phenylalanine 569, valine 608–valine 628, and tyrosine 724–phenylalanine 744.

Belongs to the complex I subunit 5 family. As to quaternary structure, NDH is composed of at least 16 different subunits, 5 of which are encoded in the nucleus.

It localises to the plastid. The protein resides in the chloroplast thylakoid membrane. The catalysed reaction is a plastoquinone + NADH + (n+1) H(+)(in) = a plastoquinol + NAD(+) + n H(+)(out). The enzyme catalyses a plastoquinone + NADPH + (n+1) H(+)(in) = a plastoquinol + NADP(+) + n H(+)(out). Its function is as follows. NDH shuttles electrons from NAD(P)H:plastoquinone, via FMN and iron-sulfur (Fe-S) centers, to quinones in the photosynthetic chain and possibly in a chloroplast respiratory chain. The immediate electron acceptor for the enzyme in this species is believed to be plastoquinone. Couples the redox reaction to proton translocation, and thus conserves the redox energy in a proton gradient. This chain is NAD(P)H-quinone oxidoreductase subunit 5, chloroplastic (ndhF), found in Gerbera jamesonii (Transvaal daisy).